The following is a 407-amino-acid chain: Multifunctional CCA protein (407 aa).

Residues glycine 8 and arginine 11 each coordinate ATP. Positions 8 and 11 each coordinate CTP. Residues aspartate 21 and aspartate 23 each coordinate Mg(2+). Residues arginine 91, arginine 137, and arginine 140 each coordinate ATP. CTP is bound by residues arginine 91, arginine 137, and arginine 140. One can recognise an HD domain in the interval 228–329; that stretch reads SGIHTLMVAQ…IKIFDKMDVW (102 aa).

This sequence belongs to the tRNA nucleotidyltransferase/poly(A) polymerase family. Bacterial CCA-adding enzyme type 1 subfamily. As to quaternary structure, monomer. Can also form homodimers and oligomers. The cofactor is Mg(2+). Requires Ni(2+) as cofactor.

It catalyses the reaction a tRNA precursor + 2 CTP + ATP = a tRNA with a 3' CCA end + 3 diphosphate. The catalysed reaction is a tRNA with a 3' CCA end + 2 CTP + ATP = a tRNA with a 3' CCACCA end + 3 diphosphate. In terms of biological role, catalyzes the addition and repair of the essential 3'-terminal CCA sequence in tRNAs without using a nucleic acid template. Adds these three nucleotides in the order of C, C, and A to the tRNA nucleotide-73, using CTP and ATP as substrates and producing inorganic pyrophosphate. tRNA 3'-terminal CCA addition is required both for tRNA processing and repair. Also involved in tRNA surveillance by mediating tandem CCA addition to generate a CCACCA at the 3' terminus of unstable tRNAs. While stable tRNAs receive only 3'-terminal CCA, unstable tRNAs are marked with CCACCA and rapidly degraded. The polypeptide is Multifunctional CCA protein (Aliivibrio fischeri (strain MJ11) (Vibrio fischeri)).